Reading from the N-terminus, the 197-residue chain is Phosphoheptose isomerase (197 aa).

The region spanning 36–197 (LVHSLAQGGK…VDSLLLGVEE (162 aa)) is the SIS domain. A substrate-binding site is contributed by 51-53 (NGG). Positions 60 and 64 each coordinate Zn(2+). Substrate-binding positions include E64, 93–94 (ND), 119–121 (STS), S124, and Q174. Residues Q174 and H182 each contribute to the Zn(2+) site.

Belongs to the SIS family. GmhA subfamily. As to quaternary structure, homotetramer. Zn(2+) serves as cofactor.

The protein localises to the cytoplasm. The enzyme catalyses 2 D-sedoheptulose 7-phosphate = D-glycero-alpha-D-manno-heptose 7-phosphate + D-glycero-beta-D-manno-heptose 7-phosphate. It functions in the pathway carbohydrate biosynthesis; D-glycero-D-manno-heptose 7-phosphate biosynthesis; D-glycero-alpha-D-manno-heptose 7-phosphate and D-glycero-beta-D-manno-heptose 7-phosphate from sedoheptulose 7-phosphate: step 1/1. Functionally, catalyzes the isomerization of sedoheptulose 7-phosphate in D-glycero-D-manno-heptose 7-phosphate. In Thiobacillus denitrificans (strain ATCC 25259 / T1), this protein is Phosphoheptose isomerase.